The chain runs to 356 residues: S-adenosylmethionine:tRNA ribosyltransferase-isomerase (356 aa).

It belongs to the QueA family. As to quaternary structure, monomer.

It is found in the cytoplasm. The enzyme catalyses 7-aminomethyl-7-carbaguanosine(34) in tRNA + S-adenosyl-L-methionine = epoxyqueuosine(34) in tRNA + adenine + L-methionine + 2 H(+). Its pathway is tRNA modification; tRNA-queuosine biosynthesis. Transfers and isomerizes the ribose moiety from AdoMet to the 7-aminomethyl group of 7-deazaguanine (preQ1-tRNA) to give epoxyqueuosine (oQ-tRNA). This is S-adenosylmethionine:tRNA ribosyltransferase-isomerase from Chromohalobacter salexigens (strain ATCC BAA-138 / DSM 3043 / CIP 106854 / NCIMB 13768 / 1H11).